We begin with the raw amino-acid sequence, 221 residues long: MEAFLGALEFQENEYEEFKELYESLKTKQKPHTLFISCVDSRVVPNLITGTQPGELYVIRNMGNVIPPKTSYKESLSTIASVEYAIAHVGVQNLIICGHSDCGACGSIHLIHDETTKAKTPYIANWIQFLEPIKEELKNHPQFSNHFAKRSWLTERLNARLQLNNLLSYDFIQERVINNELKIFGWHYIIETGRIYNYNFESHFFEPIEETIKQRISHENF.

Residues cysteine 38, aspartate 40, histidine 99, and cysteine 102 each coordinate Zn(2+).

The protein belongs to the beta-class carbonic anhydrase family. It depends on Zn(2+) as a cofactor.

The enzyme catalyses hydrogencarbonate + H(+) = CO2 + H2O. This Helicobacter pylori (strain J99 / ATCC 700824) (Campylobacter pylori J99) protein is Carbonic anhydrase (cynT).